The chain runs to 407 residues: Endo-1,4-beta-xylanase (407 aa).

The N-terminal stretch at 1–28 (MRNVVRKPLTIGLALTLLLPMGMTATSA) is a signal peptide. The 365-residue stretch at 42 to 406 (ALNAPQLDQR…KPAYWAIIDH (365 aa)) folds into the GH10 domain. Glu-187 acts as the Proton donor in catalysis. Glu-293 functions as the Nucleophile in the catalytic mechanism.

Belongs to the glycosyl hydrolase 10 (cellulase F) family.

The protein resides in the secreted. The enzyme catalyses Endohydrolysis of (1-&gt;4)-beta-D-xylosidic linkages in xylans.. Its pathway is glycan degradation; xylan degradation. This is Endo-1,4-beta-xylanase from Geobacillus stearothermophilus (Bacillus stearothermophilus).